A 409-amino-acid chain; its full sequence is Outer membrane protein assembly factor BamB (409 aa).

The N-terminal stretch at 1 to 34 (MAGNILLLILDYVFHAGSRTLRVCILSLLILLSG) is a signal peptide. A lipid anchor (N-palmitoyl cysteine) is attached at Cys-35. Cys-35 carries S-diacylglycerol cysteine lipidation.

Belongs to the BamB family. In terms of assembly, part of the Bam complex.

The protein resides in the cell outer membrane. Part of the outer membrane protein assembly complex, which is involved in assembly and insertion of beta-barrel proteins into the outer membrane. The chain is Outer membrane protein assembly factor BamB from Nitrosomonas eutropha (strain DSM 101675 / C91 / Nm57).